Here is a 246-residue protein sequence, read N- to C-terminus: D-erythrulose reductase (246 aa).

An NADP(+)-binding site is contributed by Leu-13–Arg-41. Ser-138 is a substrate binding site. Tyr-151 functions as the Proton acceptor in the catalytic mechanism. Lys-155 serves as a coordination point for NADP(+).

The protein belongs to the short-chain dehydrogenases/reductases (SDR) family. Homotetramer. In terms of processing, the N-terminus is blocked. In terms of tissue distribution, highly expressed in kidney, and also found in high amounts in liver and testis. Low expression seen in all other tissues tested.

The protein resides in the cytoplasm. It carries out the reaction D-threitol + NADP(+) = D-erythrulose + NADPH + H(+). The catalysed reaction is xylitol + NADP(+) = L-xylulose + NADPH + H(+). Catalyzes the reduction of D-erythrulose to D-threitol with the concomitant oxidation of NAD(P)H to NAD(P)(+). NADH is less effective than NADPH. May also catalyze the reduction of L-xylulose. This chain is D-erythrulose reductase (DER), found in Gallus gallus (Chicken).